Here is a 123-residue protein sequence, read N- to C-terminus: Large ribosomal subunit protein uL14c (123 aa).

Belongs to the universal ribosomal protein uL14 family. As to quaternary structure, part of the 50S ribosomal subunit.

The protein localises to the plastid. The protein resides in the chloroplast. Functionally, binds to 23S rRNA. The chain is Large ribosomal subunit protein uL14c from Saccharum hybrid (Sugarcane).